Reading from the N-terminus, the 376-residue chain is Cyclin-dependent kinase 9-B (376 aa).

One can recognise a Protein kinase domain in the interval 19–319; it reads YERLAKIGQG…SDEALNHDFF (301 aa). ATP contacts are provided by residues 25-33 and Lys-48; that span reads IGQGTFGEV. Asp-153 functions as the Proton acceptor in the catalytic mechanism. Residues 345-376 form a disordered region; it reads PPRRRGGHMPQQPANQARNPAATNQSEFDRVF. Positions 354–369 are enriched in low complexity; it reads PQQPANQARNPAATNQ.

This sequence belongs to the protein kinase superfamily. CMGC Ser/Thr protein kinase family. CDC2/CDKX subfamily. Associates with cyclin-T to form P-TEFb.

The protein localises to the nucleus. It catalyses the reaction L-seryl-[protein] + ATP = O-phospho-L-seryl-[protein] + ADP + H(+). The enzyme catalyses L-threonyl-[protein] + ATP = O-phospho-L-threonyl-[protein] + ADP + H(+). The catalysed reaction is [DNA-directed RNA polymerase] + ATP = phospho-[DNA-directed RNA polymerase] + ADP + H(+). In terms of biological role, member of the cyclin-dependent kinase pair (CDK9/cyclin-T) complex, also called positive transcription elongation factor B (P-TEFb), which is proposed to facilitate the transition from abortive to production elongation by phosphorylating the CTD (C-terminal domain) of the large subunit of RNA polymerase II (RNAP II) and SUPT5H. In Xenopus laevis (African clawed frog), this protein is Cyclin-dependent kinase 9-B (cdk9-b).